Consider the following 260-residue polypeptide: Probable 6-oxopurine nucleoside phosphorylase (260 aa).

Phosphate is bound by residues serine 9 and 49-50 (RH). Methionine 182 serves as a coordination point for substrate. Threonine 183 is a phosphate binding site. 206-208 (NMA) provides a ligand contact to substrate.

Belongs to the PNP/MTAP phosphorylase family. MTAP subfamily. Homohexamer. Dimer of a homotrimer.

It carries out the reaction a purine D-ribonucleoside + phosphate = a purine nucleobase + alpha-D-ribose 1-phosphate. The protein operates within purine metabolism; purine nucleoside salvage. Its function is as follows. Purine nucleoside phosphorylase which is highly specific for 6-oxopurine nucleosides. Cleaves guanosine or inosine to respective bases and sugar-1-phosphate molecules. Involved in purine salvage. The protein is Probable 6-oxopurine nucleoside phosphorylase of Moorella thermoacetica (strain ATCC 39073 / JCM 9320).